The chain runs to 173 residues: Adenine phosphoribosyltransferase (173 aa).

Belongs to the purine/pyrimidine phosphoribosyltransferase family. In terms of assembly, homodimer.

The protein resides in the cytoplasm. The catalysed reaction is AMP + diphosphate = 5-phospho-alpha-D-ribose 1-diphosphate + adenine. It functions in the pathway purine metabolism; AMP biosynthesis via salvage pathway; AMP from adenine: step 1/1. Its function is as follows. Catalyzes a salvage reaction resulting in the formation of AMP, that is energically less costly than de novo synthesis. The protein is Adenine phosphoribosyltransferase of Caldanaerobacter subterraneus subsp. tengcongensis (strain DSM 15242 / JCM 11007 / NBRC 100824 / MB4) (Thermoanaerobacter tengcongensis).